An 828-amino-acid chain; its full sequence is MAGHGWGTAWVLVAAATLLHAGGLAQGDCWLIEGDKGFVWLAICSQNQPPYEAIPQQINNTIVDLRLNENRIRSVQYASLSRFGNLTYLNLTKNEIGYIEDGAFSGQFNLQVLQLGYNRLRNLTEGMLRGLSKLEYLYLQANLIEVVMASAFWECPNIVNIDLSMNRIQQLGSGTFAGLTKLSVCEIYSNPFYCSCELLGFLRWLAAFTNATQTHDRVQCESPPVYAGYFLLGQGRHGHQRSILSKLQSVCTEGSYTAEVLGPPRPVPGRSQPGHSPPPPPPEPSDMPCADDECFSGDGTTPLVILTTLVPQTEARPSMKVKQLTQNSATIMVQLPSPFNRMYTLEQYNNSKSFTVSKLTQPQEEIRLTNLYTLTNYTYCVVSTSSGTHHNHTCLTICLPKPPSPPGPVPSPSTATHYIMTILGCLFGMVLVLGAVYYCLRKRRRQEEKHKKAVAAAAGSLKKTIIELKYGPEIEAPGLAPLTQGPLLGPEAVTRIPYLPAATSDVEQYKLVESSETPKATKGNYIEVRTGEPQERRGCELSRPGEPQSSVAEISTIAKEVDRVNQIINNCIDALKSESTSFQGAKSGAVSAAEPQLVLLSEPLASKHSFLSPVYKDAFGHGGLQRHHSVEAAPGPPRASTSSSGSARSPRTFRAEATGTHKAPATETKYIEKSSPVPETILTVTPAATVLRAEADKSRQYGEHRHSYPGSHPAEPPAPPPPPPTHEGLGGRKASILEPLTRPRPRDLVYSQLSPQYHNLSYSSSPEYTCRASPSIWERLRLSRRRHKDDAEFMAAGHALRKKVQFAKDEDLHDILDYWKGVSAQHKS.

Residues 1 to 25 (MAGHGWGTAWVLVAAATLLHAGGLA) form the signal peptide. The Extracellular portion of the chain corresponds to 26 to 418 (QGDCWLIEGD…VPSPSTATHY (393 aa)). LRR repeat units follow at residues 61-82 (TIVD…SLSR), 85-106 (NLTY…AFSG), 109-130 (NLQV…MLRG), 133-154 (KLEY…AFWE), and 157-178 (NIVN…TFAG). 3 N-linked (GlcNAc...) asparagine glycosylation sites follow: asparagine 85, asparagine 90, and asparagine 122. An LRRCT domain is found at 190-253 (NPFYCSCELL…LSKLQSVCTE (64 aa)). Asparagine 210 carries N-linked (GlcNAc...) asparagine glycosylation. A disordered region spans residues 258-293 (AEVLGPPRPVPGRSQPGHSPPPPPPEPSDMPCADDE). Positions 275 to 285 (HSPPPPPPEPS) are enriched in pro residues. One can recognise a Fibronectin type-III domain in the interval 312 to 399 (QTEARPSMKV…HNHTCLTICL (88 aa)). The N-linked (GlcNAc...) asparagine glycan is linked to asparagine 376. Residues 419–439 (IMTILGCLFGMVLVLGAVYYC) form a helical membrane-spanning segment. Over 440 to 828 (LRKRRRQEEK…WKGVSAQHKS (389 aa)) the chain is Cytoplasmic. Residues serine 460 and serine 646 each carry the phosphoserine modification. 2 disordered regions span residues 627-674 (HHSV…IEKS) and 697-731 (KSRQ…GLGG). Positions 638–652 (RASTSSSGSARSPRT) are enriched in low complexity. A compositionally biased stretch (basic and acidic residues) spans 697 to 706 (KSRQYGEHRH). Residues 714 to 725 (AEPPAPPPPPPT) show a composition bias toward pro residues.

Interacts with PPP1CA. In terms of tissue distribution, selectively expressed in perialvear somatostatin (Sst)-containing interneurons.

The protein localises to the membrane. Its subcellular location is the cell projection. The protein resides in the dendrite. Its function is as follows. Postsynaptic protein that regulates circuit dynamics in the central nervous system by modulating the temporal dynamics of interneuron recruitment. Specifically present in excitatory synapses onto oriens-lacunosum molecular (OLM) interneurons and acts as a regulator of presynaptic release probability to direct the formation of highly facilitating pyramidal-OLM synapses. Inhibits phosphatase activity of protein phosphatase 1 (PP1) complexes. The sequence is that of Protein ELFN1 (Elfn1) from Mus musculus (Mouse).